We begin with the raw amino-acid sequence, 219 residues long: Leukocyte surface antigen CD53 (219 aa).

The Cytoplasmic segment spans residues 2-11 (GMSSLKLLKY). The helical transmembrane segment at 12–32 (VLFFFNFLFWVCGCCILGFGI) threads the bilayer. Residues 33-54 (HLLVQNTYGILFRNLPFLTLGN) lie on the Extracellular side of the membrane. A helical membrane pass occupies residues 55–69 (VLVIVGSIIMVVAFL). Topologically, residues 70–80 (GCMGSIKENKC) are cytoplasmic. The helical transmembrane segment at 81 to 106 (LLMSFFVLLLLILLAEVTLAILLFVY) threads the bilayer. The Extracellular portion of the chain corresponds to 107–181 (EKKINTLVAE…KKGQAWFHSN (75 aa)). 3 N-linked (GlcNAc...) asparagine glycosylation sites follow: N119, N129, and N148. The chain crosses the membrane as a helical span at residues 182–206 (FLYIGIVTICVCVIQVLGMSFALTL). Topologically, residues 207–219 (NCQIDKTSQALGL) are cytoplasmic.

This sequence belongs to the tetraspanin (TM4SF) family. In terms of assembly, interacts with SCIMP. Interacts with CD45/PTPRC. Interacts with IL7R. Interacts with RBL2 and PPP2CA. Spleen and thymus, B-cells, monocytes, macrophages, neutrophils, single (CD4 or CD8) positive thymocytes, peripheral T-cells.

It is found in the cell membrane. Its subcellular location is the cell junction. It localises to the membrane. In terms of biological role, required for efficient formation of myofibers in regenerating muscle at the level of cell fusion. May be involved in growth regulation in hematopoietic cells. This is Leukocyte surface antigen CD53 (Cd53) from Rattus norvegicus (Rat).